The sequence spans 213 residues: Probable GH family 25 lysozyme 4 (213 aa).

An N-terminal signal peptide occupies residues 1 to 19 (MRLFLLLITFIALFGAINA). One can recognise a Ch-type lysozyme domain in the interval 21-213 (SGVDISQGSS…VGYDFNWYPN (193 aa)). Active-site residues include D24, D112, and E114.

This sequence belongs to the glycosyl hydrolase 25 family.

It is found in the secreted. The catalysed reaction is Hydrolysis of (1-&gt;4)-beta-linkages between N-acetylmuramic acid and N-acetyl-D-glucosamine residues in a peptidoglycan and between N-acetyl-D-glucosamine residues in chitodextrins.. This Dictyostelium discoideum (Social amoeba) protein is Probable GH family 25 lysozyme 4.